Here is a 354-residue protein sequence, read N- to C-terminus: Ion-translocating oxidoreductase complex subunit D (354 aa).

4 helical membrane-spanning segments follow: residues 19–39 (IMLLVFCAAVPGICTEIYYFG), 40–60 (FGVLFQILLSVFFSVSFEFLV), 77–99 (AAVTGVLIGISLPSLSPWWLSFF), and 119–139 (IFNPAMTGYSILLVSFPILMT). Position 187 is an FMN phosphoryl threonine (Thr-187). 5 helical membrane passes run 221–241 (WISINISFLIGGIVLLGFNVI), 245–265 (IPVSILFSLYVFFALDYYFFK), 268–288 (MYYPIMQLFFGSTMFSVFFIA), 295–315 (SITKIGRIVFGCIVGFLIWLI), and 319–339 (GNYPDAIAFSILLSNSIVPLI).

The protein belongs to the NqrB/RnfD family. In terms of assembly, the complex is composed of six subunits: RnfA, RnfB, RnfC, RnfD, RnfE and RnfG. FMN is required as a cofactor.

It is found in the cell inner membrane. Its function is as follows. Part of a membrane-bound complex that couples electron transfer with translocation of ions across the membrane. This is Ion-translocating oxidoreductase complex subunit D from Buchnera aphidicola subsp. Baizongia pistaciae (strain Bp).